The chain runs to 213 residues: Orotate phosphoribosyltransferase (213 aa).

Lys26 provides a ligand contact to 5-phospho-alpha-D-ribose 1-diphosphate. 34–35 (FF) provides a ligand contact to orotate. Residues 72–73 (YK), Arg99, Lys100, Lys103, His105, and 124–132 (DDVITAGTA) each bind 5-phospho-alpha-D-ribose 1-diphosphate. Orotate-binding residues include Thr128 and Arg156.

Belongs to the purine/pyrimidine phosphoribosyltransferase family. PyrE subfamily. As to quaternary structure, homodimer. The cofactor is Mg(2+).

It carries out the reaction orotidine 5'-phosphate + diphosphate = orotate + 5-phospho-alpha-D-ribose 1-diphosphate. The protein operates within pyrimidine metabolism; UMP biosynthesis via de novo pathway; UMP from orotate: step 1/2. Its function is as follows. Catalyzes the transfer of a ribosyl phosphate group from 5-phosphoribose 1-diphosphate to orotate, leading to the formation of orotidine monophosphate (OMP). This is Orotate phosphoribosyltransferase from Salmonella choleraesuis (strain SC-B67).